Consider the following 143-residue polypeptide: Flagellar assembly factor FliW (143 aa).

The protein belongs to the FliW family. In terms of assembly, interacts with flagellin in a 1:1 complex. Two molecules interact with each CsrA dimer; cannot interact with both flagellin and CsrA simultaneously. Has a higher affinity for CsrA than for flagellin. Interacts directly with flagellin (hag), forms a 3-way complex of Hag, FliS and FliW in which Flis and FliW do not directly interact. Interaction with Hag may occur via the C-terminus of Hag.

Its subcellular location is the cytoplasm. Acts as an anti-CsrA protein, binds CsrA and prevents it from repressing translation of its target genes, one of which is flagellin. Binds to flagellin (hag), which is implicated in polymerization, and participates in the assembly of the flagellum. An antagonist to translational regulator CsrA, it binds CsrA at an allosteric site and non-competitively inhibits CsrA binding to hag RNA. Partner switching by flagellin between FliW and CsrA provides a flagellar assembly checkpoint to tightly control the timing of flagellin synthesis. Flagellin binds to assembly factor FliW, freeing translation regulator CsrA to repress translation of the flagellin mRNA. When the flagellar hook is assembled flagellin is secreted, depleting intracellular flagellin, which frees FliW to interact with CsrA and inhibits CsrA binding to mRNA. This derepresses flagellin translation and provides protein for flagellar assembly. Once the flagellar filament is completed cytoplasmic flagellin levels rise and CsrA translation repression of flagellin reinitiates. Binds to CsrA and displaces it from hag mRNA. Binds to hag mRNA itself, but only at much higher concentrations than those required to displace CsrA. The sequence is that of Flagellar assembly factor FliW from Bacillus subtilis (strain 168).